The following is a 491-amino-acid chain: Protein DETOXIFICATION 28 (491 aa).

Transmembrane regions (helical) follow at residues 47-67, 77-97, 127-147, 160-180, 192-212, 228-248, 272-292, 302-322, 352-372, 387-407, 414-434, and 444-464; these read IVGPAIFTRVTTNLIFVITQA, LAAISIVNNVIIGFNYSLFIG, IVLFLFSILLLPMYIFATPIL, SGIISVWAIPTHFSFAFFFPI, VIAISSGVSLVVHIFVCWLFV, VSWWLNVFILFTYTTCGGCPL, GIMVCLENWYYRMLIVMTGNL, MSICMSINGLEMMVPLAFFAG, IIGIIISVLIYFLLDQIGWMF, ILLSFAILLNSVQPVLSGVAV, LVAFINLGCYYFIGLPLGIVM, and GIWAGMIFGGTMVQTLILIFI.

It belongs to the multi antimicrobial extrusion (MATE) (TC 2.A.66.1) family.

It is found in the membrane. This Arabidopsis thaliana (Mouse-ear cress) protein is Protein DETOXIFICATION 28.